We begin with the raw amino-acid sequence, 447 residues long: tRNA modification GTPase MnmE (447 aa).

(6S)-5-formyl-5,6,7,8-tetrahydrofolate-binding residues include R24, E81, and K120. The TrmE-type G domain maps to 216–371; that stretch reads GLNVVIAGKP…LRKELSDIAG (156 aa). K(+) is bound at residue N226. GTP-binding positions include 226-231, 245-251, and 270-273; these read NAGKSS, TDIAGTT, and DTAG. S230 provides a ligand contact to Mg(2+). K(+)-binding residues include T245, I247, and T250. Mg(2+) is bound at residue T251. A (6S)-5-formyl-5,6,7,8-tetrahydrofolate-binding site is contributed by K447.

Belongs to the TRAFAC class TrmE-Era-EngA-EngB-Septin-like GTPase superfamily. TrmE GTPase family. In terms of assembly, homodimer. Heterotetramer of two MnmE and two MnmG subunits. K(+) is required as a cofactor.

Its subcellular location is the cytoplasm. Functionally, exhibits a very high intrinsic GTPase hydrolysis rate. Involved in the addition of a carboxymethylaminomethyl (cmnm) group at the wobble position (U34) of certain tRNAs, forming tRNA-cmnm(5)s(2)U34. This Ruthia magnifica subsp. Calyptogena magnifica protein is tRNA modification GTPase MnmE.